Reading from the N-terminus, the 145-residue chain is AP-2 complex subunit sigma (145 aa).

This sequence belongs to the adaptor complexes small subunit family. In terms of assembly, adaptor protein complex 2 (AP-2) is a heterotetramer composed of two large adaptins (alpha-type subunit apl3 and beta-type subunit apl1), a medium chain (mu-type subunit apm4) and a small adaptin (sigma-type subunit aps2).

The protein resides in the cell membrane. The protein localises to the membrane. It is found in the coated pit. Component of the adaptor complexes which link clathrin to receptors in coated vesicles. Clathrin-associated protein complexes are believed to interact with the cytoplasmic tails of membrane proteins, leading to their selection and concentration. This is AP-2 complex subunit sigma (aps2) from Aspergillus fumigatus (strain ATCC MYA-4609 / CBS 101355 / FGSC A1100 / Af293) (Neosartorya fumigata).